A 302-amino-acid chain; its full sequence is Spermidine synthase (302 aa).

An N-acetylmethionine modification is found at Met1. Positions Glu18 to Lys253 constitute a PABS domain. Residue Gln49 participates in S-adenosyl 3-(methylsulfanyl)propylamine binding. Tyr79 lines the putrescine pocket. Residues Gln80, Asp104, Glu124, Asp155 to Gly156, and Asp173 each bind S-adenosyl 3-(methylsulfanyl)propylamine. Asp173 functions as the Proton acceptor in the catalytic mechanism. Putrescine contacts are provided by residues Asp173–Asp176 and Tyr241.

Belongs to the spermidine/spermine synthase family. In terms of assembly, homodimer or homotetramer.

The enzyme catalyses S-adenosyl 3-(methylsulfanyl)propylamine + putrescine = S-methyl-5'-thioadenosine + spermidine + H(+). Its pathway is amine and polyamine biosynthesis; spermidine biosynthesis; spermidine from putrescine: step 1/1. Its activity is regulated as follows. The activity is thought to be regulated mainly by the availability of decarboxylated S-adenosylmethionine. Functionally, catalyzes the production of spermidine from putrescine and decarboxylated S-adenosylmethionine (dcSAM). Has a strong preference for putrescine as substrate, and has very low activity towards 1,3-diaminopropane. Has extremely low activity towards spermidine. The sequence is that of Spermidine synthase (SRM) from Homo sapiens (Human).